Here is a 430-residue protein sequence, read N- to C-terminus: Elongation factor Tu (430 aa).

The tr-type G domain maps to 13 to 220; sequence RPHLNIGTIG…ACDKYIALPE (208 aa). The segment at 22–29 is G1; the sequence is GHVDHGKT. Residue 22 to 29 coordinates GTP; that stretch reads GHVDHGKT. Thr29 serves as a coordination point for Mg(2+). Positions 66 to 70 are G2; that stretch reads GITIS. The G3 stretch occupies residues 87-90; that stretch reads DCPG. Residues 87–91 and 142–145 each bind GTP; these read DCPGH and NKCD. Positions 142–145 are G4; the sequence is NKCD. A G5 region spans residues 188-190; sequence SAL.

Belongs to the TRAFAC class translation factor GTPase superfamily. Classic translation factor GTPase family. EF-Tu/EF-1A subfamily. As to quaternary structure, monomer.

It localises to the cytoplasm. The enzyme catalyses GTP + H2O = GDP + phosphate + H(+). In terms of biological role, GTP hydrolase that promotes the GTP-dependent binding of aminoacyl-tRNA to the A-site of ribosomes during protein biosynthesis. This is Elongation factor Tu from Neorickettsia sennetsu (strain ATCC VR-367 / Miyayama) (Ehrlichia sennetsu).